Consider the following 289-residue polypeptide: ATP synthase gamma chain (289 aa).

Belongs to the ATPase gamma chain family. F-type ATPases have 2 components, CF(1) - the catalytic core - and CF(0) - the membrane proton channel. CF(1) has five subunits: alpha(3), beta(3), gamma(1), delta(1), epsilon(1). CF(0) has three main subunits: a, b and c.

The protein localises to the cell inner membrane. In terms of biological role, produces ATP from ADP in the presence of a proton gradient across the membrane. The gamma chain is believed to be important in regulating ATPase activity and the flow of protons through the CF(0) complex. This Azoarcus sp. (strain BH72) protein is ATP synthase gamma chain.